The sequence spans 86 residues: Neurotoxin LmNaTx1 (86 aa).

The N-terminal stretch at 1 to 18 (MKILIIFVIAITVVGVQS) is a signal peptide. The LCN-type CS-alpha/beta domain maps to 19–85 (KDGYPIYSTG…VWTYAENTCG (67 aa)). 4 disulfides stabilise this stretch: Cys-33–Cys-84, Cys-37–Cys-58, Cys-44–Cys-65, and Cys-48–Cys-67. At Cys-84 the chain carries Cysteine amide.

This sequence belongs to the long (4 C-C) scorpion toxin superfamily. Sodium channel inhibitor family. Beta subfamily. Expressed by the venom gland.

The protein resides in the secreted. Functionally, binds voltage-independently at site-4 of sodium channels (Nav) and shift the voltage of activation toward more negative potentials thereby affecting sodium channel activation and promoting spontaneous and repetitive firing. This is Neurotoxin LmNaTx1 from Lychas mucronatus (Chinese swimming scorpion).